The chain runs to 945 residues: Splicing factor, suppressor of white-apricot homolog (945 aa).

Disordered stretches follow at residues Met1–Thr28 and Tyr157–Ala190. Composition is skewed to basic and acidic residues over residues Ala9 to Ala21 and Pro169 to Ala178. An SURP motif 1 repeat occupies Ile211–Tyr253. Residues Ala269 to His298 form a disordered region. Ser283 is subject to Phosphoserine. The segment covering Asp284 to Gly294 has biased composition (acidic residues). Lys315 is modified (N6-acetyllysine). 2 disordered regions span residues Lys332 to Val355 and Ser403 to Thr438. Over residues Ala335–Pro352 the composition is skewed to low complexity. Over residues Val412–Thr425 the composition is skewed to pro residues. Over residues Thr426–Thr438 the composition is skewed to low complexity. Residues Val458–Tyr498 form an SURP motif 2 repeat. 3 disordered regions span residues Gly512 to Gly566, Pro589 to Arg680, and Gly714 to Lys921. Positions Thr514–Thr527 are enriched in low complexity. Positions Ala528 to Ala540 are enriched in acidic residues. Over residues Pro589–Asp598 the composition is skewed to basic and acidic residues. Ser601 and Ser621 each carry phosphoserine. The span at Ser615 to Val630 shows a compositional bias: low complexity. Residues Glu632–Leu686 are a coiled coil. Thr639 is subject to Phosphothreonine. Basic and acidic residues-rich tracts occupy residues Leu643 to Glu679 and Lys733 to Glu752. Basic residues-rich tracts occupy residues Lys753–His787 and Thr795–Ala810. A compositionally biased stretch (basic and acidic residues) spans His811–Ser821. Ser829 and Ser831 each carry phosphoserine. The segment covering Ser835–Ala861 has biased composition (basic residues). Positions Gln871–Ser894 are enriched in low complexity. A compositionally biased stretch (basic and acidic residues) spans Ser895–Gly908. Phosphoserine is present on residues Ser899 and Ser903. The span at Gln909–Ser920 shows a compositional bias: low complexity.

It localises to the nucleus. In terms of biological role, plays a role as an alternative splicing regulator. Regulate its own expression at the level of RNA processing. Also regulates the splicing of fibronectin and CD45 genes. May act, at least in part, by interaction with other R/S-containing splicing factors. Represses the splicing of MAPT/Tau exon 10. The protein is Splicing factor, suppressor of white-apricot homolog (Sfswap) of Rattus norvegicus (Rat).